We begin with the raw amino-acid sequence, 393 residues long: Formate-dependent phosphoribosylglycinamide formyltransferase (393 aa).

Residues 22 to 23 (EL) and Glu-82 contribute to the N(1)-(5-phospho-beta-D-ribosyl)glycinamide site. ATP is bound by residues Arg-114, Lys-155, 160-165 (SSGKGQ), 195-198 (EGFI), and Glu-203. An ATP-grasp domain is found at 119-308 (RLAAEELGLP…EFALHARAIL (190 aa)). Positions 267 and 279 each coordinate Mg(2+). Residues Asp-286, Lys-356, and 363-364 (RR) each bind N(1)-(5-phospho-beta-D-ribosyl)glycinamide.

It belongs to the PurK/PurT family. Homodimer.

It catalyses the reaction N(1)-(5-phospho-beta-D-ribosyl)glycinamide + formate + ATP = N(2)-formyl-N(1)-(5-phospho-beta-D-ribosyl)glycinamide + ADP + phosphate + H(+). It participates in purine metabolism; IMP biosynthesis via de novo pathway; N(2)-formyl-N(1)-(5-phospho-D-ribosyl)glycinamide from N(1)-(5-phospho-D-ribosyl)glycinamide (formate route): step 1/1. Its function is as follows. Involved in the de novo purine biosynthesis. Catalyzes the transfer of formate to 5-phospho-ribosyl-glycinamide (GAR), producing 5-phospho-ribosyl-N-formylglycinamide (FGAR). Formate is provided by PurU via hydrolysis of 10-formyl-tetrahydrofolate. The chain is Formate-dependent phosphoribosylglycinamide formyltransferase from Pseudomonas aeruginosa (strain LESB58).